Reading from the N-terminus, the 140-residue chain is HTH-type transcriptional regulator LysM (140 aa).

The HTH asnC-type domain occupies 4 to 67 (VDESDLKILE…ELENEIRAIV (64 aa)). Positions 23-42 (YTSIAKELKISEAAVRKRIE) form a DNA-binding region, H-T-H motif.

Homotetramer.

It localises to the cytoplasm. The protein operates within amino-acid biosynthesis; L-lysine biosynthesis via AAA pathway [regulation]. Its function is as follows. In the absence or at low concentrations of lysine, activates the biosynthesis of this amino acid via the alpha-aminoadipate (AAA) pathway. The protein is HTH-type transcriptional regulator LysM (lysM) of Sulfurisphaera tokodaii (strain DSM 16993 / JCM 10545 / NBRC 100140 / 7) (Sulfolobus tokodaii).